The following is a 318-amino-acid chain: N-acyl-aromatic-L-amino acid amidohydrolase (carboxylate-forming) (318 aa).

The hydrolytic domain stretch occupies residues 1–210 (MSSLPGSREP…ILDFIELFNQ (210 aa)). 2 residues coordinate Zn(2+): His21 and Glu24. Substrate-binding positions include Arg63 and 70-71 (NR). His116 contacts Zn(2+). Glu177 and Tyr287 together coordinate substrate. Residues 211–318 (GMDLPAFEMD…RLTPRSTQTP (108 aa)) are shielding domain. Phosphothreonine is present on Thr317.

It belongs to the AspA/AstE family. Aspartoacylase subfamily. Exists as a mixture of homodimers and homotetramer, both catalytically active. The cofactor is Zn(2+). Expressed predominantly in kidney and to a lesser extent in liver. Weakly expressed in heart, small intestine, brain, lung, testis, and stomach.

It is found in the apical cell membrane. The protein localises to the cytoplasm. The catalysed reaction is an N-acyl-aromatic L-alpha-amino acid + H2O = an aromatic L-alpha-amino acid + a carboxylate. It catalyses the reaction an N-acetyl-L-cysteine-S-conjugate + H2O = an S-substituted L-cysteine + acetate. In terms of biological role, plays an important role in deacetylating mercapturic acids in kidney proximal tubules. Also acts on N-acetyl-aromatic amino acids. This chain is N-acyl-aromatic-L-amino acid amidohydrolase (carboxylate-forming) (Acy3), found in Mus musculus (Mouse).